Reading from the N-terminus, the 691-residue chain is Threonine--tRNA ligase (691 aa).

Residues 1–69 (MSTPEITPAA…QQDVEVAAVP (69 aa)) enclose the TGS domain. The interval 268 to 574 (DHRRLGQELD…LLEHYAGAFP (307 aa)) is catalytic. Residues C373, H424, and H551 each contribute to the Zn(2+) site.

It belongs to the class-II aminoacyl-tRNA synthetase family. In terms of assembly, homodimer. The cofactor is Zn(2+).

It is found in the cytoplasm. The enzyme catalyses tRNA(Thr) + L-threonine + ATP = L-threonyl-tRNA(Thr) + AMP + diphosphate + H(+). In terms of biological role, catalyzes the attachment of threonine to tRNA(Thr) in a two-step reaction: L-threonine is first activated by ATP to form Thr-AMP and then transferred to the acceptor end of tRNA(Thr). Also edits incorrectly charged L-seryl-tRNA(Thr). This chain is Threonine--tRNA ligase, found in Corynebacterium jeikeium (strain K411).